The chain runs to 213 residues: ATP phosphoribosyltransferase (213 aa).

It belongs to the ATP phosphoribosyltransferase family. Short subfamily. Heteromultimer composed of HisG and HisZ subunits.

The protein resides in the cytoplasm. The catalysed reaction is 1-(5-phospho-beta-D-ribosyl)-ATP + diphosphate = 5-phospho-alpha-D-ribose 1-diphosphate + ATP. The protein operates within amino-acid biosynthesis; L-histidine biosynthesis; L-histidine from 5-phospho-alpha-D-ribose 1-diphosphate: step 1/9. Catalyzes the condensation of ATP and 5-phosphoribose 1-diphosphate to form N'-(5'-phosphoribosyl)-ATP (PR-ATP). Has a crucial role in the pathway because the rate of histidine biosynthesis seems to be controlled primarily by regulation of HisG enzymatic activity. This Saccharophagus degradans (strain 2-40 / ATCC 43961 / DSM 17024) protein is ATP phosphoribosyltransferase.